The primary structure comprises 426 residues: Pannexin-1 (426 aa).

At 1-40 (MAIAHLATEYVFSDFLLKEPTEPKFKGLRLELAVDKMVTC) the chain is on the cytoplasmic side. The residue at position 40 (Cys40) is an S-nitrosocysteine. The chain crosses the membrane as a helical span at residues 41 to 61 (IAVGLPLLLISLAFAQEISIG). At 62 to 106 (TQISCFSPSSFSWRQAAFVDSYCWAAVQQKSSLQSESGNLPLWLH) the chain is on the extracellular side. 2 cysteine pairs are disulfide-bonded: Cys66–Cys264 and Cys84–Cys245. Residues 107-127 (KFFPYILLLFAILLYLPALFW) traverse the membrane as a helical segment. Residues 128–216 (RFSAAPHLCS…HLIMKYISCR (89 aa)) are Cytoplasmic-facing. Tyr198 is modified (phosphotyrosine). Residues 217–237 (LVTFVVILLACIYLSYYFSLS) traverse the membrane as a helical segment. Over 238–277 (SLSDEFLCSIKSGVLKNDSTIPDRFQCKLIAVGIFQLLSL) the chain is Extracellular. Asn254 carries N-linked (GlcNAc...) asparagine glycosylation. A helical membrane pass occupies residues 278–298 (INLIVYALLIPVVVYTFFIPF). The Cytoplasmic segment spans residues 299-426 (RQKTDILKVY…SRQRLLNPSC (128 aa)). Residue Cys346 is modified to S-nitrosocysteine.

It belongs to the pannexin family. Homoheptameric. In terms of processing, S-nitrosylation inhibits channel currents and ATP release. N-glycosylation may play a role in cell surface targeting. Exists in three glycosylation states: non-glycosylated (GLY0), high-mannose glycosylated (GLY1), and fully mature glycosylated (GLY2). Post-translationally, phosphorylated at Tyr-198 by SRC. Phosphorylation activates ATP release. Constitutively phosphorylated in vascular smooth muscle cells. In terms of processing, cleaved by CASP3 and CASP7 during apoptosis. Cleavage opens the channel for the release of metabolites and induces plasma membrane permeability during apoptosis. As to expression, widely expressed, including in cartilage, skin, spleen and brain.

The protein resides in the cell membrane. Its subcellular location is the endoplasmic reticulum membrane. The catalysed reaction is chloride(in) = chloride(out). The enzyme catalyses iodide(out) = iodide(in). It catalyses the reaction Ca(2+)(in) = Ca(2+)(out). It carries out the reaction ATP(in) = ATP(out). The catalysed reaction is K(+)(in) = K(+)(out). The enzyme catalyses Na(+)(in) = Na(+)(out). It catalyses the reaction nitrate(in) = nitrate(out). It carries out the reaction L-aspartate(out) = L-aspartate(in). The catalysed reaction is L-glutamate(out) = L-glutamate(in). The enzyme catalyses D-gluconate(in) = D-gluconate(out). It catalyses the reaction spermidine(in) = spermidine(out). In terms of biological role, ion channel involved in a variety of physiological functions such as blood pressure regulation, apoptotic cell clearance and oogenesis. Forms anion-selective channels with relatively low conductance and an order of permeabilities: nitrate&gt;iodide&gt;chlroride&gt;&gt;aspartate=glutamate=gluconate. Can release ATP upon activation through phosphorylation or cleavage at C-terminus. May play a role as a Ca(2+)-leak channel to regulate ER Ca(2+) homeostasis. Functionally, during apoptosis and after cleavage by caspases of the C-terminal tail, acts as a plasma membrane channel which mediates the regulated release of find-me signals, such as nucleotides ATP and UTP, and selective plasme membrane permeability. This Mus musculus (Mouse) protein is Pannexin-1.